A 41-amino-acid polypeptide reads, in one-letter code: Conotoxin Bu22 (41 aa).

Residues serine 1–arginine 25 constitute a propeptide that is removed on maturation. Intrachain disulfides connect cysteine 27-cysteine 33 and cysteine 28-cysteine 40.

This sequence belongs to the conotoxin A superfamily. As to expression, expressed by the venom duct.

Its subcellular location is the secreted. The protein is Conotoxin Bu22 of Conus bullatus (Bubble cone).